Reading from the N-terminus, the 70-residue chain is Small ribosomal subunit protein bS21 (70 aa).

Residues 48–61 (KLAAAVKRQSKRLR) are compositionally biased toward basic residues. The disordered stretch occupies residues 48–70 (KLAAAVKRQSKRLRSQQLPPKMY).

The protein belongs to the bacterial ribosomal protein bS21 family.

This Thiobacillus denitrificans (strain ATCC 25259 / T1) protein is Small ribosomal subunit protein bS21.